Here is a 491-residue protein sequence, read N- to C-terminus: Pyruvate carboxylase subunit A (491 aa).

The Biotin carboxylation domain occupies 1–445 (MFSKILVANR…HTHFVDEYRR (445 aa)). Residues K116, E200, and H235 each coordinate ATP. One can recognise an ATP-grasp domain in the interval 120–316 (KKLMKKAGVP…LVKEQIRVAS (197 aa)). R291 is a catalytic residue.

As to quaternary structure, heterooctamer of four A and four B subunits. Mg(2+) is required as a cofactor. It depends on Mn(2+) as a cofactor. Requires Co(2+) as cofactor.

The catalysed reaction is hydrogencarbonate + pyruvate + ATP = oxaloacetate + ADP + phosphate + H(+). The protein operates within carbohydrate biosynthesis; gluconeogenesis. Its activity is regulated as follows. Inhibited by ADP and alpha-ketoglutarate. Pyruvate carboxylase catalyzes a 2-step reaction, involving the ATP-dependent carboxylation of the covalently attached biotin in the first step and the transfer of the carboxyl group to pyruvate in the second. The protein is Pyruvate carboxylase subunit A (pycA) of Methanothermobacter thermautotrophicus (strain ATCC 29096 / DSM 1053 / JCM 10044 / NBRC 100330 / Delta H) (Methanobacterium thermoautotrophicum).